The chain runs to 464 residues: Soluble pyridine nucleotide transhydrogenase (464 aa).

35 to 44 contacts FAD; that stretch reads DDRRQVGGNC.

This sequence belongs to the class-I pyridine nucleotide-disulfide oxidoreductase family. FAD is required as a cofactor.

It localises to the cytoplasm. It catalyses the reaction NAD(+) + NADPH = NADH + NADP(+). Its function is as follows. Conversion of NADPH, generated by peripheral catabolic pathways, to NADH, which can enter the respiratory chain for energy generation. The chain is Soluble pyridine nucleotide transhydrogenase from Pseudomonas putida (strain ATCC 47054 / DSM 6125 / CFBP 8728 / NCIMB 11950 / KT2440).